We begin with the raw amino-acid sequence, 66 residues long: Large ribosomal subunit protein uL29 (66 aa).

This sequence belongs to the universal ribosomal protein uL29 family.

The chain is Large ribosomal subunit protein uL29 from Bartonella tribocorum (strain CIP 105476 / IBS 506).